The chain runs to 339 residues: HTH-type transcriptional regulator PtxS (339 aa).

One can recognise an HTH lacI-type domain in the interval 12 to 67; sequence VTISEVARVAGVSKATVSRYIGGDRQLLAEATAKRLEEVIERLGYRPNQMARGLKR. Residues 14-33 constitute a DNA-binding region (H-T-H motif); it reads ISEVARVAGVSKATVSRYIG.

As to quaternary structure, homodimer in solution.

Its activity is regulated as follows. 2-ketogluconate acts as a molecular effector and causes dissociation of PtxS from its target promoter. In terms of biological role, negatively regulates glucose metabolism by binding directly to the promoter region of the kgu and gad operons. It also negatively regulates its own synthesis. This Pseudomonas putida (strain ATCC 47054 / DSM 6125 / CFBP 8728 / NCIMB 11950 / KT2440) protein is HTH-type transcriptional regulator PtxS.